The following is an 84-amino-acid chain: Mu-conotoxin-like Cal 12.2b (84 aa).

The N-terminal stretch at 1–19 (MKLTCVLVVLLLVLPFGDL) is a signal peptide. A propeptide spanning residues 20–42 (ITTSNTEDNKRGATPWQNSLKAR) is cleaved from the precursor. 4 disulfides stabilise this stretch: Cys-45–Cys-57, Cys-52–Cys-65, Cys-59–Cys-70, and Cys-64–Cys-76. Trp-72 is subject to 6'-bromotryptophan. Pro-77 carries the post-translational modification 4-hydroxyproline. A 6'-bromotryptophan modification is found at Trp-81.

The protein belongs to the conotoxin O1 superfamily. Expressed by the venom duct.

It localises to the secreted. Mu-conotoxins block voltage-gated sodium channels. This toxin reversibly blocks voltage-gated sodium channel in cephalopods, with no alteration in the voltage dependence of sodium conductance or on the kinetics of inactivation. This chain is Mu-conotoxin-like Cal 12.2b, found in Californiconus californicus (California cone).